The sequence spans 914 residues: DNA mismatch repair protein MutS (914 aa).

The disordered stretch occupies residues N28–E74. G726–S733 is an ATP binding site.

The protein belongs to the DNA mismatch repair MutS family.

Functionally, this protein is involved in the repair of mismatches in DNA. It is possible that it carries out the mismatch recognition step. This protein has a weak ATPase activity. This is DNA mismatch repair protein MutS from Prochlorococcus marinus (strain SARG / CCMP1375 / SS120).